We begin with the raw amino-acid sequence, 172 residues long: 3-phenylpropionate/cinnamic acid dioxygenase subunit beta (172 aa).

It belongs to the bacterial ring-hydroxylating dioxygenase beta subunit family. In terms of assembly, this dioxygenase system consists of four proteins: the two subunits of the hydroxylase component (HcaE and HcaF), a ferredoxin (HcaC) and a ferredoxin reductase (HcaD).

It carries out the reaction 3-phenylpropanoate + NADH + O2 + H(+) = 3-(cis-5,6-dihydroxycyclohexa-1,3-dien-1-yl)propanoate + NAD(+). The catalysed reaction is (E)-cinnamate + NADH + O2 + H(+) = (2E)-3-(cis-5,6-dihydroxycyclohexa-1,3-dien-1-yl)prop-2-enoate + NAD(+). It participates in aromatic compound metabolism; 3-phenylpropanoate degradation. Functionally, part of the multicomponent 3-phenylpropionate dioxygenase. Converts 3-phenylpropionic acid (PP) and cinnamic acid (CI) into 3-phenylpropionate-dihydrodiol (PP-dihydrodiol) and cinnamic acid-dihydrodiol (CI-dihydrodiol), respectively. The sequence is that of 3-phenylpropionate/cinnamic acid dioxygenase subunit beta from Shigella sonnei (strain Ss046).